We begin with the raw amino-acid sequence, 146 residues long: UPF0756 membrane protein PTH_1817 (146 aa).

The next 4 helical transmembrane spans lie at 6–26, 46–66, 69–89, and 105–125; these read LLIGMAAHSSLIVIAACILLI, MGLTFLLLSILVPLASGKASW, IISSLASFSGLLAVAGGALAT, and IVFGLLLGSILGIVFLHGIPV.

Belongs to the UPF0756 family.

It localises to the cell membrane. This is UPF0756 membrane protein PTH_1817 from Pelotomaculum thermopropionicum (strain DSM 13744 / JCM 10971 / SI).